A 189-amino-acid polypeptide reads, in one-letter code: Potassium-transporting ATPase KdpC subunit (189 aa).

A helical transmembrane segment spans residues 10-30 (LTLVFCVFFSVCYILVLWIFA).

Belongs to the KdpC family. The system is composed of three essential subunits: KdpA, KdpB and KdpC.

The protein localises to the cell inner membrane. Part of the high-affinity ATP-driven potassium transport (or Kdp) system, which catalyzes the hydrolysis of ATP coupled with the electrogenic transport of potassium into the cytoplasm. This subunit acts as a catalytic chaperone that increases the ATP-binding affinity of the ATP-hydrolyzing subunit KdpB by the formation of a transient KdpB/KdpC/ATP ternary complex. The polypeptide is Potassium-transporting ATPase KdpC subunit (Phocaeicola vulgatus (strain ATCC 8482 / DSM 1447 / JCM 5826 / CCUG 4940 / NBRC 14291 / NCTC 11154) (Bacteroides vulgatus)).